A 718-amino-acid polypeptide reads, in one-letter code: Receptor-like protein 36 (718 aa).

An N-terminal signal peptide occupies residues 1 to 26; sequence MIRSLSYCFLTIYFFLSILPLPNTIA. The Extracellular portion of the chain corresponds to 27–695; that stretch reads CPTRLLCRSD…SESEDQLLNW (669 aa). LRR repeat units lie at residues 70 to 94, 95 to 118, 120 to 141, 143 to 165, 166 to 188, 189 to 213, 214 to 238, 239 to 261, 262 to 286, 288 to 310, 312 to 334, 335 to 359, 360 to 383, 384 to 406, 407 to 431, 433 to 454, 455 to 480, and 481 to 505; these read DAIL…IGNL, SHLT…IGNL, QLES…SFAN, TKLS…LANL, TSLS…DLSG, LHNL…LLMI, PSLV…TFSL, SRLR…SISK, LVNL…ISKV, NLTS…VWRS, KLDY…EVID, GASL…ICKV, KDLY…LKYS, TYFH…LFIK, DSQL…LINC, RIEF…WLGS, LPYL…AYLG, and FPSI…YFAN. Asparagine 93 carries N-linked (GlcNAc...) asparagine glycosylation. N-linked (GlcNAc...) asparagine glycans are attached at residues asparagine 141 and asparagine 164. Asparagine 199 is a glycosylation site (N-linked (GlcNAc...) asparagine). A glycan (N-linked (GlcNAc...) asparagine) is linked at asparagine 288. Asparagine 373 and asparagine 393 each carry an N-linked (GlcNAc...) asparagine glycan. N-linked (GlcNAc...) asparagine glycosylation occurs at asparagine 528. LRR repeat units follow at residues 550–574, 575–598, 599–622, and 624–647; these read FEGF…IGLL, SELR…LANI, TNLE…LGKL, and FLSN…QFAT. 5 N-linked (GlcNAc...) asparagine glycosylation sites follow: asparagine 581, asparagine 597, asparagine 610, asparagine 629, and asparagine 649. Residues 696–716 form a helical membrane-spanning segment; the sequence is IAAAIAFGPGMFCGLVIGHIF. Topologically, residues 717-718 are cytoplasmic; sequence TS.

Belongs to the RLP family.

The protein localises to the cell membrane. This Arabidopsis thaliana (Mouse-ear cress) protein is Receptor-like protein 36.